A 524-amino-acid chain; its full sequence is Acetyl-CoA decarbonylase/synthase complex subunit beta (524 aa).

[Ni-Fe-S] cluster-binding residues include Cys212, Cys215, Cys301, and Cys303. A disordered region spans residues 436–466; the sequence is WVEEEEEEAEEVAEEAAAEAAPAAQPAQAAQ. The segment covering 437 to 452 has biased composition (acidic residues); the sequence is VEEEEEEAEEVAEEAA. Low complexity predominate over residues 453 to 466; that stretch reads AEAAPAAQPAQAAQ.

This sequence belongs to the CdhC family. As to quaternary structure, monomer. The ACDS complex is made up of alpha, epsilon, beta, gamma and delta chains with a probable stoichiometry of (alpha(2)epsilon(2))(4)-beta(8)-(gamma(1)delta(1))(8). [Ni-Fe-S] cluster is required as a cofactor.

It catalyses the reaction Co(I)-[corrinoid Fe-S protein] + acetyl-CoA + H(+) = methyl-Co(III)-[corrinoid Fe-S protein] + CO + CoA. In terms of biological role, part of a complex that catalyzes the reversible cleavage of acetyl-CoA, allowing autotrophic growth from CO(2). The alpha-epsilon complex generates CO from CO(2), while the beta subunit (this protein) combines the CO with CoA and a methyl group to form acetyl-CoA. The methyl group, which is incorporated into acetyl-CoA, is transferred to the beta subunit by a corrinoid iron-sulfur protein (the gamma-delta complex). The polypeptide is Acetyl-CoA decarbonylase/synthase complex subunit beta (Archaeoglobus fulgidus (strain ATCC 49558 / DSM 4304 / JCM 9628 / NBRC 100126 / VC-16)).